A 261-amino-acid chain; its full sequence is Undecaprenyl-diphosphatase (261 aa).

Transmembrane regions (helical) follow at residues 16 to 36 (TEFL…LFGF), 40 to 60 (GLVF…VYFW), 82 to 102 (FWFL…LEDI), 107 to 127 (LRAP…LYLA), 140 to 160 (IRFG…IPGV), 183 to 203 (FSFL…MLKM), 211 to 231 (SFVL…WFLI), and 239 to 259 (FNIF…IALL).

It belongs to the UppP family.

It localises to the cell membrane. It carries out the reaction di-trans,octa-cis-undecaprenyl diphosphate + H2O = di-trans,octa-cis-undecaprenyl phosphate + phosphate + H(+). In terms of biological role, catalyzes the dephosphorylation of undecaprenyl diphosphate (UPP). Confers resistance to bacitracin. The chain is Undecaprenyl-diphosphatase from Desulforudis audaxviator (strain MP104C).